Reading from the N-terminus, the 700-residue chain is Elongation factor G (700 aa).

One can recognise a tr-type G domain in the interval 8 to 290 (DKYRNIGISA…AVVELLPSPL (283 aa)). GTP contacts are provided by residues 17–24 (AHIDAGKT), 88–92 (DTPGH), and 142–145 (NKMD).

The protein belongs to the TRAFAC class translation factor GTPase superfamily. Classic translation factor GTPase family. EF-G/EF-2 subfamily.

The protein localises to the cytoplasm. In terms of biological role, catalyzes the GTP-dependent ribosomal translocation step during translation elongation. During this step, the ribosome changes from the pre-translocational (PRE) to the post-translocational (POST) state as the newly formed A-site-bound peptidyl-tRNA and P-site-bound deacylated tRNA move to the P and E sites, respectively. Catalyzes the coordinated movement of the two tRNA molecules, the mRNA and conformational changes in the ribosome. This Polynucleobacter necessarius subsp. necessarius (strain STIR1) protein is Elongation factor G.